The sequence spans 1351 residues: Transcriptional regulator ovo (1351 aa).

Residues 1 to 31 form a required for Ubr3 binding and tal-dependent proteolytic processing region; it reads MPKIFLIKNRLHQQQQRLLESQNLLQHKNQD. Disordered regions lie at residues 22-77, 100-119, 184-397, 447-554, 640-665, 778-807, 834-887, 916-1000, 1023-1044, and 1113-1192; these read QNLL…SDQQ, LDHL…NPNQ, NSPI…SDEE, AGHG…HFNA, SNSK…GQTS, DDEE…PVEQ, GSNQ…YQHA, LLSQ…PSPT, PMSS…GSSN, and SKHG…DSSS. The span at 49–60 shows a compositional bias: pro residues; that stretch reads SPTPTSQPPPEP. 2 stretches are compositionally biased toward low complexity: residues 61–72 and 104–119; these read QGQGQQVLGQVP and NQNQ…NPNQ. Residues 205-232 are compositionally biased toward basic and acidic residues; sequence EKEKPAEREREKSDERTEQVEKEERVER. Acidic residues predominate over residues 233-242; the sequence is EEEEDDEVDV. Positions 262–272 are enriched in basic and acidic residues; sequence QRKEYPQEPKD. The segment covering 324-340 has biased composition (pro residues); that stretch reads TPPPADQRPSPPPPRDP. Residues 447-486 show a composition bias toward low complexity; that stretch reads AGHGRNSSSSSGAAGQGFQSSGFGSQNSGSGSSSGNQNAG. The segment covering 487–505 has biased composition (gly residues); sequence SGAGSPGSGAGGGGGMGGG. A compositionally biased stretch (polar residues) spans 530–552; that stretch reads KSGQQSTASNNTGQSPGANHSHF. A compositionally biased stretch (basic residues) spans 644–653; sequence FHNHHHHHQH. Polar residues predominate over residues 793–807; it reads STPSLTPDSVTPVEQ. Composition is skewed to low complexity over residues 835 to 878, 916 to 962, 970 to 979, 1025 to 1044, and 1121 to 1175; these read SNQQ…HVQQ, LLSQ…QQQQ, QQQQQPQPQS, SSSS…GSSN, and HQQQ…HGSA. 4 C2H2-type zinc fingers span residues 1197–1219, 1225–1247, 1253–1276, and 1292–1315; these read FVCR…MKCH, YLCT…TRTH, YKCN…QKVH, and YVCE…KNNH.

As to quaternary structure, interacts (via N-terminus) with Ubr3; the interaction is mediated by tal. N-terminus is proteolytically cleaved and ubiquitinated via a tal-dependent mechanism, leading to the proteolytic degradation of the N-terminus and the production of transcriptional activator shavenbaby, a truncated form with transcriptional activator activity.

It localises to the cytoplasm. It is found in the nucleus. Its subcellular location is the nucleoplasm. Its function is as follows. Transcriptional regulator with essential functions in the germline and soma. Plays an essential role in regulating the formation of apical cell extensions such as denticles and aristae, and initiating cytoskeletal remodeling during epidermal differentiation. In terms of biological role, transcriptional repressor which functions in postembryonic development. The full-length unprocessed form acts as a transcriptional repressor (Transcriptional repressor svb). Transcriptional activator which initiates trichome development and also promotes tarsal joint development. Has an essential somatic role regulating the tal-dependent formation of trichomes, and initiating cytoskeletal remodeling during epidermal differentiation. Function with SoxN is required for correct denticle morphogenesis on the embryonic epidermis. SoxN and svb appear to act both independently and in conjunction with each other to activate certain genes involved in denticle morphogenesis; Svb appears to be involved in regulating denticle length whereas SoxN regulates the denticle base circumference. Also functions in the development of other apical cell extensions such as bristles. Also has an important role in tarsal joint development, repressing expression of the N ligand Dl and defining its signaling boundary. Functionally, transcriptional repressor which is specifically involved in female germline development, where it functions antagonistically to isoform D. Negatively regulates expression of otu and may also have autoregulatory activity. Negatively regulates expression of piwi in the primordial germ cells (PGCs). Its function is as follows. Transcriptional activator which is specifically involved in female germline development, where it functions antagonistically to isoform C. Necessary and sufficient for normal oogenesis. Required in the primordial germ cells (PGCs) for normal development of male and female germline cells. Plays a role in germline sex determination. Binds the promoter DNA and positively regulates the transcription of the otu gene in a stage-specific manner. May have autoregulatory activity. This is Transcriptional regulator ovo from Drosophila melanogaster (Fruit fly).